We begin with the raw amino-acid sequence, 302 residues long: Negative regulator of the PHO system (302 aa).

The Protein kinase domain maps to 6-296; that stretch reads FKQLEKLGNG…AKQALLHPWF (291 aa). ATP is bound by residues 12-20 and lysine 35; that span reads LGNGTYATV. Catalysis depends on aspartate 132, which acts as the Proton acceptor.

It belongs to the protein kinase superfamily. CMGC Ser/Thr protein kinase family. CDC2/CDKX subfamily. In terms of assembly, interacts with a number of cyclins.

It carries out the reaction L-seryl-[protein] + ATP = O-phospho-L-seryl-[protein] + ADP + H(+). The catalysed reaction is L-threonyl-[protein] + ATP = O-phospho-L-threonyl-[protein] + ADP + H(+). When phosphate concentrations are high it phosphorylates the PHO4 transcription factor thus establishing repression. The protein is Negative regulator of the PHO system (PHO85) of Candida glabrata (strain ATCC 2001 / BCRC 20586 / JCM 3761 / NBRC 0622 / NRRL Y-65 / CBS 138) (Yeast).